The primary structure comprises 444 residues: Tubulin beta-8 chain (444 aa).

Positions 1–4 match the MREI motif motif; that stretch reads MREI. GTP-binding residues include glutamine 11, glutamate 69, serine 138, glycine 142, threonine 143, and glycine 144. Glutamate 69 serves as a coordination point for Mg(2+). Position 172 is a phosphoserine; by CDK1 (serine 172). 2 residues coordinate GTP: asparagine 204 and asparagine 226. Residues 423–444 form a disordered region; the sequence is QQYQDATAEEEEDEEYAEEEVA. A compositionally biased stretch (acidic residues) spans 429 to 444; sequence TAEEEEDEEYAEEEVA. Glutamate 436 carries the 5-glutamyl polyglutamate modification.

Belongs to the tubulin family. In terms of assembly, dimer of alpha and beta chains. A typical microtubule is a hollow water-filled tube with an outer diameter of 25 nm and an inner diameter of 15 nM. Alpha-beta heterodimers associate head-to-tail to form protofilaments running lengthwise along the microtubule wall with the beta-tubulin subunit facing the microtubule plus end conferring a structural polarity. Microtubules usually have 13 protofilaments but different protofilament numbers can be found in some organisms and specialized cells. The cofactor is Mg(2+). Post-translationally, some glutamate residues at the C-terminus are polyglycylated, resulting in polyglycine chains on the gamma-carboxyl group. Glycylation is mainly limited to tubulin incorporated into axonemes (cilia and flagella) whereas glutamylation is prevalent in neuronal cells, centrioles, axonemes, and the mitotic spindle. Both modifications can coexist on the same protein on adjacent residues, and lowering polyglycylation levels increases polyglutamylation, and reciprocally. Cilia and flagella glycylation is required for their stability and maintenance. Flagella glycylation controls sperm motility. In terms of processing, some glutamate residues at the C-terminus are polyglutamylated, resulting in polyglutamate chains on the gamma-carboxyl group. Polyglutamylation plays a key role in microtubule severing by spastin (SPAST). SPAST preferentially recognizes and acts on microtubules decorated with short polyglutamate tails: severing activity by SPAST increases as the number of glutamates per tubulin rises from one to eight, but decreases beyond this glutamylation threshold. Glutamylation is also involved in cilia motility. Phosphorylated on Ser-172 by CDK1 during the cell cycle, from metaphase to telophase, but not in interphase. This phosphorylation inhibits tubulin incorporation into microtubules.

It localises to the cytoplasm. The protein localises to the cytoskeleton. It is found in the spindle. Its function is as follows. Tubulin is the major constituent of microtubules, a cylinder consisting of laterally associated linear protofilaments composed of alpha- and beta-tubulin heterodimers. Microtubules grow by the addition of GTP-tubulin dimers to the microtubule end, where a stabilizing cap forms. Below the cap, tubulin dimers are in GDP-bound state, owing to GTPase activity of alpha-tubulin. Has a key role in meiotic spindle assembly and oocyte maturation. This is Tubulin beta-8 chain (TUBB8) from Pan troglodytes (Chimpanzee).